The chain runs to 262 residues: Ribosomal RNA small subunit methyltransferase A (262 aa).

S-adenosyl-L-methionine contacts are provided by asparagine 13, leucine 15, glycine 40, glutamate 61, aspartate 85, and asparagine 105.

It belongs to the class I-like SAM-binding methyltransferase superfamily. rRNA adenine N(6)-methyltransferase family. RsmA subfamily.

The protein resides in the cytoplasm. It catalyses the reaction adenosine(1518)/adenosine(1519) in 16S rRNA + 4 S-adenosyl-L-methionine = N(6)-dimethyladenosine(1518)/N(6)-dimethyladenosine(1519) in 16S rRNA + 4 S-adenosyl-L-homocysteine + 4 H(+). Specifically dimethylates two adjacent adenosines (A1518 and A1519) in the loop of a conserved hairpin near the 3'-end of 16S rRNA in the 30S particle. May play a critical role in biogenesis of 30S subunits. The protein is Ribosomal RNA small subunit methyltransferase A of Laribacter hongkongensis (strain HLHK9).